Reading from the N-terminus, the 298-residue chain is MTLSNPAIAAASGVILAGAYLIDPSALPFVAAGVAATWARVLFKKTAVKTPPMDPKEYRKFKLVDKVHCSPNTAMYKFALPHEDDLLNLPIGQHISIMANINGKDISRSYTPTSSSDDVGHFVLCIKSYPQGNISKMFSELSIGDSINARGPKGQFSYTPNMCRAIGMIAGGTGLTPMLQIIRAIVKNPEDKTQVNFIFANVTEEDIILKAELDLLSQKHPQFKVYYVLNNAPEGWTGGVGFVNADMIKEHMPAPAADIKVLLCGPPPMVSAMSKITQDLGYDKVNAVSKLPDQVFKF.

A helical transmembrane segment spans residues 14-34 (VILAGAYLIDPSALPFVAAGV). The 104-residue stretch at 56–159 (KEYRKFKLVD…RGPKGQFSYT (104 aa)) folds into the FAD-binding FR-type domain. Residues 139-154 (SELS…GPKG) and 165-197 (AIGM…QVNF) each bind FAD.

Belongs to the flavoprotein pyridine nucleotide cytochrome reductase family. In terms of assembly, monomer. Component of the 2-(3-amino-3-carboxypropyl)histidine synthase complex composed of DPH1, DPH2, DPH3 and a NADH-dependent reductase, predominantly CBR1. FAD is required as a cofactor.

The protein localises to the mitochondrion outer membrane. The catalysed reaction is 2 Fe(III)-[cytochrome b5] + NADH = 2 Fe(II)-[cytochrome b5] + NAD(+) + H(+). The enzyme catalyses 2 Fe(3+)-[Dph3] + NADH = 2 Fe(2+)-[Dph3] + NAD(+) + H(+). It functions in the pathway protein modification; peptidyl-diphthamide biosynthesis. NADH-dependent reductase for DPH3 and cytochrome b5. Required for the first step of diphthamide biosynthesis, a post-translational modification of histidine which occurs in elongation factor 2. DPH1 and DPH2 transfer a 3-amino-3-carboxypropyl (ACP) group from S-adenosyl-L-methionine (SAM) to a histidine residue, the reaction is assisted by a reduction system comprising DPH3 and a NADH-dependent reductase, predominantly CBR1. By reducing DPH3, also involved in the formation of the tRNA wobble base modification mcm5s 2U (5-methoxycarbonylmethyl-2-thiouridine), mediated by the elongator complex. The cytochrome b5/NADH cytochrome b5 reductase electron transfer system supports the catalytic activity of several sterol biosynthetic enzymes. The polypeptide is NADH-cytochrome b5 reductase 1 (CBR1) (Mortierella alpina (Oleaginous fungus)).